A 509-amino-acid chain; its full sequence is MNDDIIILLSVFCGIFFICFIICSSIALYLWKSKSRKRLVEQYTKEAKQAKKQILANGYKEISEAKMLFLKRSELEKNELDRVKEQLELRSNDLKRNQEIVESKSQRLDASLLDLEKRKFLLDKKEEYLIKVLEDASSLTKSQAKELLIKQVKNKSEKELISILKNAELQAHSNSKMIANNIIISAMERIKVELTSQRTTNIVKLPSDDLKGRIIGKDGRNMKAFKQIGGVDIVIDETPNTVVVSSFNPIRREIATRTLEQLIIDGRIQPVKIENELKKQEQELEYIIQETGLSTIKELNINDIDIELVKLIGKLKFRTSYGQNVLAHSIEVAKLSGAIASELGLDVEKAIRAGLLHDIGKAIDFEKQGSHVVLGAEIAKKYNEDPIVINCIESHHEDKEKESEIAAIVAIADSISASRPGARYNAIDEFILRMTEIEKIGNSIPGVAKTYALQSGRQIRLIVDPLVASDLDLAMILEKMKEEIKNKVIIPGEITITVIRERKETDVLK.

The helical transmembrane segment at 5 to 25 (IIILLSVFCGIFFICFIICSS) threads the bilayer. Residues 199-259 (TTNIVKLPSD…IRREIATRTL (61 aa)) enclose the KH domain. The HD domain maps to 325–418 (VLAHSIEVAK…VAIADSISAS (94 aa)).

The protein belongs to the RNase Y family.

It localises to the cell membrane. Endoribonuclease that initiates mRNA decay. This is Ribonuclease Y from Mycoplasma capricolum subsp. capricolum (strain California kid / ATCC 27343 / NCTC 10154).